Here is a 428-residue protein sequence, read N- to C-terminus: Glycine reductase complex component B subunits alpha and beta (428 aa).

Cys-242 functions as the Schiff-base intermediate with substrate; via pyruvic acid in the catalytic mechanism. Cys-242 bears the Pyruvic acid (Cys) mark.

As to quaternary structure, heterohexamer of two alpha, two beta and two gamma subunits. Component of the glycine reductase complex, together with components A and C. PB is substrate specific. The peptide chain is cleaved into beta and alpha chains, and the alpha chain N-terminal cysteine is deaminated and oxidized to form a reactive pyruvoyl group.

It catalyses the reaction acetyl phosphate + [thioredoxin]-disulfide + NH4(+) + H2O = [thioredoxin]-dithiol + glycine + phosphate + H(+). In the first step of glycine reductase, the substrate is bound to component PB via a Schiff base intermediate. Then the PB-activated substrate is nucleophilically attacked by the selenol anion of component PA to transform it to a carboxymethylated selenoether and the respective amine. By action of component PC, acetyl phosphate is formed, leaving component PA in its oxidized state. Finally component PA becomes reduced by the thioredoxin system to start a new catalytic cycle of reductive deamination. The chain is Glycine reductase complex component B subunits alpha and beta (grdE) from Peptoclostridium acidaminophilum (Eubacterium acidaminophilum).